Consider the following 1246-residue polypeptide: HMG2-induced ER-remodeling protein 1 (1246 aa).

3 disordered regions span residues 19-241, 263-288, and 816-836; these read KGKR…GSLT, HHIQ…LPPI, and MPDA…KDEK. Over residues 27–41 the composition is skewed to low complexity; sequence KSAASTRTSEATTTS. Residues 58–95 are compositionally biased toward polar residues; that stretch reads TIASPQRPLSGQNVNNELSNSKPAVSAEKVSQQGQVPT. Ser102 carries the phosphoserine modification. Residue Thr128 is modified to Phosphothreonine. Composition is skewed to low complexity over residues 154-163 and 211-230; these read RSSSISTSLN and SKIS…PSSS. A compositionally biased stretch (basic and acidic residues) spans 271–282; the sequence is SGREQDSPHSES. A Phosphoserine modification is found at Ser277. Ser1013 is modified (phosphoserine). Polar residues-rich tracts occupy residues 1109-1133 and 1200-1215; these read SSRH…TPDS and SRSP…QQKA. Disordered regions lie at residues 1109 to 1157 and 1192 to 1224; these read SSRH…LPKI and SLYG…LVED. Thr1130 bears the Phosphothreonine mark. Ser1200, Ser1204, and Ser1207 each carry phosphoserine.

This sequence belongs to the GIP3/HER1 family. In terms of assembly, may interact with ribosomes.

The protein resides in the cytoplasm. In terms of biological role, required for HMG2-induced endoplasmic reticulum-remodeling. The polypeptide is HMG2-induced ER-remodeling protein 1 (HER1) (Saccharomyces cerevisiae (strain ATCC 204508 / S288c) (Baker's yeast)).